The following is a 407-amino-acid chain: uncharacterized protein (407 aa).

This is an uncharacterized protein from Mycobacterium bovis (strain ATCC BAA-935 / AF2122/97).